Here is a 260-residue protein sequence, read N- to C-terminus: Ava biosynthesis cluster protein M (260 aa).

Residues 1–15 form the signal peptide; that stretch reads MKVLVLGLCRTGTSS.

Belongs to the cytochrome P450 family.

Its pathway is secondary metabolite biosynthesis. Its function is as follows. Part of the cluster that mediates the biosynthesis of a highly modified cyclo-arginine-tryptophan dipeptide (cRW). The first step of the pathway is perfornmed by the arginine-containing cyclodipeptide synthase (RCPDS) avaA that acts as the scaffold-generating enzyme and is responsible for formation of the cyclo-Arg-Trp (cRW) diketopiperazine. AvaB then acts as a multifunctional flavoenzyme that is responsible for generating the cyclo-Arg-formylkynurenine DKP, which can be deformylated by avaC. AvaB then further catalyzes an additional N-oxidation followed by cyclization and dehydration. The next step is an N-acetylation of the guanidine group catalyzed by the arginine N-acetyltransferase avaD. The roles of the additional enzymes identified within the ava cluster still have to be determined. In Aspergillus versicolor, this protein is Ava biosynthesis cluster protein M.